The following is a 102-amino-acid chain: Protein translation factor SUI1 homolog (102 aa).

Belongs to the SUI1 family.

This chain is Protein translation factor SUI1 homolog, found in Nitrosopumilus maritimus (strain SCM1).